Here is a 344-residue protein sequence, read N- to C-terminus: Oxygen sensor histidine kinase NreB (344 aa).

4 residues coordinate [4Fe-4S] cluster: Cys58, Cys61, Cys73, and Cys76. Residues 147 to 344 form the Histidine kinase domain; it reads ENERKRISRE…GTIITLDIPI (198 aa). His158 bears the Phosphohistidine; by autocatalysis mark.

[4Fe-4S] cluster is required as a cofactor. In terms of processing, autophosphorylated.

Its subcellular location is the cytoplasm. It catalyses the reaction ATP + protein L-histidine = ADP + protein N-phospho-L-histidine.. In terms of biological role, member of the two-component regulatory system NreB/NreC involved in the control of dissimilatory nitrate/nitrite reduction in response to oxygen. NreB functions as a direct oxygen sensor histidine kinase which is autophosphorylated, in the absence of oxygen, probably at the conserved histidine residue, and transfers its phosphate group probably to a conserved aspartate residue of NreC. NreB/NreC activates the expression of the nitrate (narGHJI) and nitrite (nir) reductase operons, as well as the putative nitrate transporter gene narT. The chain is Oxygen sensor histidine kinase NreB (nreB) from Staphylococcus epidermidis (strain ATCC 12228 / FDA PCI 1200).